The chain runs to 176 residues: Small ribosomal subunit protein uS5 (176 aa).

The S5 DRBM domain maps to 11–74 (LSEVLVDVNR…QAAKKKMMKV (64 aa)).

Belongs to the universal ribosomal protein uS5 family. Part of the 30S ribosomal subunit. Contacts proteins S4 and S8.

In terms of biological role, with S4 and S12 plays an important role in translational accuracy. Functionally, located at the back of the 30S subunit body where it stabilizes the conformation of the head with respect to the body. The chain is Small ribosomal subunit protein uS5 from Rickettsia bellii (strain RML369-C).